The following is a 222-amino-acid chain: Eukaryotic translation initiation factor 3 subunit K (222 aa).

Positions 46-208 constitute a PCI domain; that stretch reads YDLEANLAVL…KIKTKNITEK (163 aa).

It belongs to the eIF-3 subunit K family. As to quaternary structure, component of the eukaryotic translation initiation factor 3 (eIF-3) complex. The eIF-3 complex interacts with pix.

It localises to the cytoplasm. Its function is as follows. Component of the eukaryotic translation initiation factor 3 (eIF-3) complex, which is involved in protein synthesis of a specialized repertoire of mRNAs and, together with other initiation factors, stimulates binding of mRNA and methionyl-tRNAi to the 40S ribosome. The eIF-3 complex specifically targets and initiates translation of a subset of mRNAs involved in cell proliferation. This is Eukaryotic translation initiation factor 3 subunit K from Drosophila persimilis (Fruit fly).